A 419-amino-acid chain; its full sequence is UDP-N-acetylglucosamine 1-carboxyvinyltransferase (419 aa).

22–23 (KN) lines the phosphoenolpyruvate pocket. Arg-91 serves as a coordination point for UDP-N-acetyl-alpha-D-glucosamine. Residue Cys-115 is the Proton donor of the active site. Residue Cys-115 is modified to 2-(S-cysteinyl)pyruvic acid O-phosphothioketal. UDP-N-acetyl-alpha-D-glucosamine-binding positions include 120-124 (RPVDL), 160-163 (KVSV), Asp-305, and Ile-327.

This sequence belongs to the EPSP synthase family. MurA subfamily.

The protein resides in the cytoplasm. It catalyses the reaction phosphoenolpyruvate + UDP-N-acetyl-alpha-D-glucosamine = UDP-N-acetyl-3-O-(1-carboxyvinyl)-alpha-D-glucosamine + phosphate. The protein operates within cell wall biogenesis; peptidoglycan biosynthesis. Its function is as follows. Cell wall formation. Adds enolpyruvyl to UDP-N-acetylglucosamine. This chain is UDP-N-acetylglucosamine 1-carboxyvinyltransferase, found in Cronobacter sakazakii (strain ATCC BAA-894) (Enterobacter sakazakii).